A 1302-amino-acid polypeptide reads, in one-letter code: Cingulin-like protein 1 (1302 aa).

Residues 1–554 (MELYFGEYQH…ELTQQTNEET (554 aa)) form a head region. Positions 37 to 51 (AGSYGVSIRVQGIDG) match the ZIM motif. Positions 75 to 104 (PFPPPVINNLPLHSSNGSVPKENSEELQLP) are disordered. Serine 112 and serine 202 each carry phosphoserine. Disordered regions lie at residues 186 to 209 (KKPW…EDPA), 251 to 305 (FTSG…TPTS), and 364 to 392 (PGLQ…VDSA). Residues 195–204 (PSNSQPTSPS) are compositionally biased toward polar residues. Residues 264–282 (AHPETKKTRPDVLPFRRQD) show a composition bias toward basic and acidic residues. 3 positions are modified to phosphoserine: serine 283, serine 297, and serine 298. Over residues 296–305 (SSSSSTTPTS) the composition is skewed to low complexity. Residues 366–377 (LQRRGRSGKRNR) are compositionally biased toward basic residues. Basic and acidic residues predominate over residues 378-388 (INTDDRKRSRS). Residues serine 388, serine 391, and serine 486 each carry the phosphoserine modification. Positions 604-1258 (NSTSEVKDLL…QLNSMKKDLR (655 aa)) form a coiled coil. Positions 655–664 (RSQHNEKVEE) are enriched in basic and acidic residues. The segment at 655-675 (RSQHNEKVEENSTLQQRLEES) is disordered. At serine 708 the chain carries Phosphoserine. Disordered regions lie at residues 903-929 (AAQG…SEQK) and 1263-1287 (PSKV…YEAP). Residues 917–929 (QLSEKLKEESEQK) are compositionally biased toward basic and acidic residues. The segment at 1263–1302 (PSKVLDDMDDDDDLSTDGGSLYEAPVSYTFSKDSTVASQI) is tail.

This sequence belongs to the cingulin family. In terms of assembly, homodimer or oligomer. Interacts with CD2AP and SH3BP1; probably part of a complex at cell junctions. As to expression, smooth muscle, spleen, testis, fetal brain, amygdala, corpus callosum, cerebellum, thalamus and subthalamic nucleus of adult brain.

The protein resides in the cell junction. It is found in the tight junction. Its function is as follows. May be involved in anchoring the apical junctional complex, especially tight junctions, to actin-based cytoskeletons. The sequence is that of Cingulin-like protein 1 (CGNL1) from Homo sapiens (Human).